Consider the following 260-residue polypeptide: Cell division protein DivIB (260 aa).

Residues 1-25 lie on the Cytoplasmic side of the membrane; that stretch reads MGAQDQNGKNHGGLFRDFQNRNVKK. Residues 26 to 46 traverse the membrane as a helical segment; the sequence is MWPLVMPITIILLVMIFMISS. The Extracellular segment spans residues 47 to 260; the sequence is YSRVKKVTVS…STKTTSVQGY (214 aa). The POTRA domain maps to 48–119; the sequence is SRVKKVTVSG…NQVKIKVEEY (72 aa).

This sequence belongs to the FtsQ/DivIB family. DivIB subfamily.

It is found in the cell membrane. Its function is as follows. Cell division protein that may be involved in stabilizing or promoting the assembly of the division complex. The sequence is that of Cell division protein DivIB from Lentilactobacillus buchneri (strain NRRL B-30929) (Lactobacillus buchneri).